The sequence spans 180 residues: Major urinary protein 5 (180 aa).

Positions 1 to 18 (MKLLLLLCLELTLVYVHA) are cleaved as a signal peptide. Cys82 and Cys175 are oxidised to a cystine.

The protein belongs to the calycin superfamily. Lipocalin family.

It is found in the secreted. In terms of biological role, major urinary proteins (Mups) bind pheromones, and thus stabilize them to allow slow release into the air from urine marks. May protect pheromones from oxidation. May also act as pheromones themselves. In this context, they play a role in the regulation of social behaviors, such as aggression, mating, pup-suckling, territory establishment and dominance. This chain is Major urinary protein 5, found in Mus musculus (Mouse).